The following is a 212-amino-acid chain: Fibrillarin-like rRNA/tRNA 2'-O-methyltransferase (212 aa).

S-adenosyl-L-methionine-binding positions include threonine 76–threonine 77, glutamate 94–leucine 95, aspartate 119–alanine 120, and aspartate 139–glutamine 142.

This sequence belongs to the methyltransferase superfamily. Fibrillarin family. Interacts with nop5. Component of box C/D small ribonucleoprotein (sRNP) particles that contain rpl7ae, FlpA and nop5, plus a guide RNA.

Functionally, involved in pre-rRNA and tRNA processing. Utilizes the methyl donor S-adenosyl-L-methionine to catalyze the site-specific 2'-hydroxyl methylation of ribose moieties in rRNA and tRNA. Site specificity is provided by a guide RNA that base pairs with the substrate. Methylation occurs at a characteristic distance from the sequence involved in base pairing with the guide RNA. In Picrophilus torridus (strain ATCC 700027 / DSM 9790 / JCM 10055 / NBRC 100828 / KAW 2/3), this protein is Fibrillarin-like rRNA/tRNA 2'-O-methyltransferase.